The sequence spans 117 residues: G antigen 12B/C/D/E (117 aa).

The segment at 1-117 (MSWRGRSTYY…PEEGEKQSQC (117 aa)) is disordered. Composition is skewed to acidic residues over residues 32–45 (FSDE…EEGE) and 87–96 (ECEDGPDGQE). Residues 103 to 117 (EEVKTPEEGEKQSQC) are compositionally biased toward basic and acidic residues.

This sequence belongs to the GAGE family.

This Homo sapiens (Human) protein is G antigen 12B/C/D/E (GAGE12B).